We begin with the raw amino-acid sequence, 322 residues long: Acetylglutamate kinase (322 aa).

Substrate contacts are provided by residues 89 to 90 (GG), Arg-111, and Asn-217.

This sequence belongs to the acetylglutamate kinase family. ArgB subfamily.

It is found in the cytoplasm. It carries out the reaction N-acetyl-L-glutamate + ATP = N-acetyl-L-glutamyl 5-phosphate + ADP. The protein operates within amino-acid biosynthesis; L-arginine biosynthesis; N(2)-acetyl-L-ornithine from L-glutamate: step 2/4. Functionally, catalyzes the ATP-dependent phosphorylation of N-acetyl-L-glutamate. The protein is Acetylglutamate kinase of Ehrlichia ruminantium (strain Gardel).